A 196-amino-acid chain; its full sequence is Peroxynitrite isomerase (196 aa).

A GXWXGXG motif is present at residues 46–52; it reads GVWRGRG. Heme b is bound at residue histidine 186.

Belongs to the nitrobindin family. Homodimer. It depends on heme b as a cofactor.

The enzyme catalyses peroxynitrite = nitrate. It participates in nitrogen metabolism. Heme-binding protein able to scavenge peroxynitrite and to protect free L-tyrosine against peroxynitrite-mediated nitration, by acting as a peroxynitrite isomerase that converts peroxynitrite to nitrate. Therefore, this protein likely plays a role in peroxynitrite sensing and in the detoxification of reactive nitrogen and oxygen species (RNS and ROS, respectively). Is able to bind nitric oxide (NO) in vitro, but may act as a sensor of peroxynitrite levels in vivo. The protein is Peroxynitrite isomerase of Salinispora tropica (strain ATCC BAA-916 / DSM 44818 / JCM 13857 / NBRC 105044 / CNB-440).